Consider the following 372-residue polypeptide: Spermidine/putrescine import ATP-binding protein PotA (372 aa).

One can recognise an ABC transporter domain in the interval 11-241; sequence IELRSITKSY…PANLFVARFI (231 aa). An ATP-binding site is contributed by 43-50; sequence GPSGCGKT.

It belongs to the ABC transporter superfamily. Spermidine/putrescine importer (TC 3.A.1.11.1) family. The complex is composed of two ATP-binding proteins (PotA), two transmembrane proteins (PotB and PotC) and a solute-binding protein (PotD).

It localises to the cell inner membrane. The catalysed reaction is ATP + H2O + polyamine-[polyamine-binding protein]Side 1 = ADP + phosphate + polyamineSide 2 + [polyamine-binding protein]Side 1.. Functionally, part of the ABC transporter complex PotABCD involved in spermidine/putrescine import. Responsible for energy coupling to the transport system. The protein is Spermidine/putrescine import ATP-binding protein PotA of Aggregatibacter actinomycetemcomitans (Actinobacillus actinomycetemcomitans).